The following is a 185-amino-acid chain: Ribosome-recycling factor (185 aa).

The protein belongs to the RRF family.

The protein resides in the cytoplasm. In terms of biological role, responsible for the release of ribosomes from messenger RNA at the termination of protein biosynthesis. May increase the efficiency of translation by recycling ribosomes from one round of translation to another. The chain is Ribosome-recycling factor from Actinobacillus succinogenes (strain ATCC 55618 / DSM 22257 / CCUG 43843 / 130Z).